Reading from the N-terminus, the 1221-residue chain is MMFRSDRMWSCHWKWKPSPLLFLFALYIMCVPHSVWGCANCRVVLSNPSGTFTSPCYPNDYPNSQACMWTLRAPTGYIIQITFNDFDIEEAPNCIYDSLSLDNGESQTKFCGATAKGLSFNSSANEMHVSFSSDFSIQKKGFNASYIRVAVSLRNQKVILPQTSDAYQVSVAKSISIPELSAFTLCFEATKVGHEDSDWTAFSYSNASFTQLLSFGKAKSGYFLSISDSKCLLNNALPVKEKEDIFAESFEQLCLVWNNSLGSIGVNFKRNYETVPCDSTISKVIPGNGKLLLGSNQNEIVSLKGDIYNFRLWNFTMNAKILSNLSCNVKGNVVDWQNDFWNIPNLALKAESNLSCGSYLIPLPAAELASCADLGTLCQATVNSPSTTPPTVTTNMPVTNRIDKQRNDGIIYRISVVIQNILRHPEVKVQSKVAEWLNSTFQNWNYTVYVVNISFHLSAGEDKIKVKRSLEDEPRLVLWALLVYNATNNTNLEGKIIQQKLLKNNESLDEGLRLHTVNVRQLGHCLAMEEPKGYYWPSIQPSEYVLPCPDKPGFSASRICFYNATNPLVTYWGPVDISNCLKEANEVANQILNLTADGQNLTSANITNIVEQVKRIVNKEENIDITLGSTLMNIFSNILSSSDSDLLESSSEALKTIDELAFKIDLNSTSHVNITTRNLALSVSSLLPGTNAISNFSIGLPSNNESYFQMDFESGQVDPLASVILPPNLLENLSPEDSVLVRRAQFTFFNKTGLFQDVGPQRKTLVSYVMACSIGNITIQNLKDPVQIKIKHTRTQEVHHPICAFWDLNKNKSFGGWNTSGCVAHRDSDASETVCLCNHFTHFGVLMDLPRSASQLDARNTKVLTFISYIGCGISAIFSAATLLTYVAFEKLRRDYPSKILMNLSTALLFLNLLFLLDGWITSFNVDGLCIAVAVLLHFFLLATFTWMGLEAIHMYIALVKVFNTYIRRYILKFCIIGWGLPALVVSVVLASRNNNEVYGKESYGKEKGDEFCWIQDPVIFYVTCAGYFGVMFFLNIAMFIVVMVQICGRNGKRSNRTLREEVLRNLRSVVSLTFLLGMTWGFAFFAWGPLNIPFMYLFSIFNSLQGLFIFIFHCAMKENVQKQWRQHLCCGRFRLADNSDWSKTATNIIKKSSDNLGKSLSSSSIGSNSTYLTSKSKSSSTTYFKRNSHTDNVSYEHSFNKSGSLRQCFHGQVLVKTGPC.

Positions 1–37 (MMFRSDRMWSCHWKWKPSPLLFLFALYIMCVPHSVWG) are cleaved as a signal peptide. Topologically, residues 38–862 (CANCRVVLSN…ASQLDARNTK (825 aa)) are extracellular. Cys-41 and Cys-67 are oxidised to a cystine. Residues 41 to 149 (CRVVLSNPSG…KGFNASYIRV (109 aa)) form the CUB domain. 2 residues coordinate Ca(2+): Glu-89 and Asp-97. Cys-94 and Cys-111 form a disulfide bridge. The N-linked (GlcNAc...) asparagine glycan is linked to Asn-121. Asp-134, Ser-136, and Ile-137 together coordinate Ca(2+). Residues Asn-143, Asn-206, Asn-258, Asn-314, Asn-324, Asn-353, Asn-438, Asn-445, Asn-452, Asn-485, Asn-488, and Asn-505 are each glycosylated (N-linked (GlcNAc...) asparagine). Residues 154 to 356 (RNQKVILPQT…ALKAESNLSC (203 aa)) enclose the Pentraxin (PTX) domain. Disulfide bonds link Cys-186–Cys-254 and Cys-231–Cys-277. The tract at residues 473–837 (EPRLVLWALL…SDASETVCLC (365 aa)) is mediates interaction with laminin-2. 2 disulfide bridges follow: Cys-525–Cys-560 and Cys-548–Cys-580. N-linked (GlcNAc...) asparagine glycosylation is found at Asn-563, Asn-593, Asn-600, Asn-605, Asn-667, Asn-673, Asn-695, Asn-704, Asn-750, Asn-776, Asn-811, and Asn-818. The 184-residue stretch at 670-853 (SHVNITTRNL…GVLMDLPRSA (184 aa)) folds into the GAIN-B domain. Cystine bridges form between Cys-803–Cys-835 and Cys-822–Cys-837. The GPS stretch occupies residues 803 to 853 (CAFWDLNKNKSFGGWNTSGCVAHRDSDASETVCLCNHFTHFGVLMDLPRSA). The stachel stretch occupies residues 842–850 (HFGVLMDLP). A helical membrane pass occupies residues 863 to 883 (VLTFISYIGCGISAIFSAATL). The Cytoplasmic portion of the chain corresponds to 884–903 (LTYVAFEKLRRDYPSKILMN). The helical transmembrane segment at 904 to 924 (LSTALLFLNLLFLLDGWITSF) threads the bilayer. At 925–929 (NVDGL) the chain is on the extracellular side. A helical membrane pass occupies residues 930-950 (CIAVAVLLHFFLLATFTWMGL). Residues 951-970 (EAIHMYIALVKVFNTYIRRY) lie on the Cytoplasmic side of the membrane. The chain crosses the membrane as a helical span at residues 971-991 (ILKFCIIGWGLPALVVSVVLA). Over 992-1024 (SRNNNEVYGKESYGKEKGDEFCWIQDPVIFYVT) the chain is Extracellular. Residues 1025–1045 (CAGYFGVMFFLNIAMFIVVMV) traverse the membrane as a helical segment. The Cytoplasmic portion of the chain corresponds to 1046–1069 (QICGRNGKRSNRTLREEVLRNLRS). Residues 1070–1090 (VVSLTFLLGMTWGFAFFAWGP) traverse the membrane as a helical segment. Residues 1091-1092 (LN) lie on the Extracellular side of the membrane. The helical transmembrane segment at 1093 to 1113 (IPFMYLFSIFNSLQGLFIFIF) threads the bilayer. Asn-1103 lines the 17alpha-hydroxyprogesterone pocket. Residues 1114–1221 (HCAMKENVQK…GQVLVKTGPC (108 aa)) are Cytoplasmic-facing. The tract at residues 1156 to 1176 (NLGKSLSSSSIGSNSTYLTSK) is disordered. Phosphoserine occurs at positions 1165 and 1168.

It belongs to the G-protein coupled receptor 2 family. Adhesion G-protein coupled receptor (ADGR) subfamily. Heterodimer of 2 chains generated by proteolytic processing; the large extracellular N-terminal fragment and the membrane-bound C-terminal fragment predominantly remain associated and non-covalently linked. Interacts with Laminin-2; this interaction stabilizes the receptor in an inactive state. Laminin-2 polymerization could facilitate ADGRG6-NTF removal, thereby exposing the tethered agonist to drive myelination. Interacts with PRNP. Interacts with ITGB1. Interacts with LRP1. Proteolytically cleaved into 2 conserved sites: one in the GPS region of the GAIN-B domain (S1 site) and the other in the middle of the extracellular domain (S2 site). The proteolytic cleavage at S1 site generates an extracellular subunit and a seven-transmembrane subunit. Furin is involved in the cleavage of the S2 site generating a soluble fragment. Processing at the GPS region occurred independent of and probably prior to the cleavage at the S2 site. Proteolytic cleavage is required for activation of the receptor. Post-translationally, highly glycosylated. In terms of tissue distribution, expressed in placenta and to a lower extent in pancreas and liver. Detected in aortic endothelial cells but not in skin microvascular endothelial cells.

It is found in the cell membrane. With respect to regulation, forms a heterodimer of 2 chains generated by proteolytic processing that remain associated through non-covalent interactions mediated by the GAIN-B domain. In the inactivated receptor, the Stachel sequence (also named stalk) is embedded in the GAIN-B domain, where it adopts a beta-strand conformation. On activation, the Stachel moves into the 7 transmembrane region and adopts a twisted hook-shaped configuration that forms contacts within the receptor, leading to coupling of a G-alpha protein, which activates signaling. The cleaved GAIN-B and N-terminal domains can then dissociate from the rest of the receptor. Adhesion G-protein coupled receptor (aGPCR) for steroid hormones, such as progesterone and 17alpha-hydroxyprogesterone (17OHP). Involved in many biological processes, such as myelination, sprouting angiogenesis, placenta, ear and cartilage development. Ligand binding causes a conformation change that triggers signaling via guanine nucleotide-binding proteins (G proteins) and modulates the activity of downstream effectors, such as adenylate cyclase. ADGRG6 is coupled to G(i) G alpha proteins and mediates inhibition of adenylate cyclase. Also able to couple to G(q) G proteins. Involved in myelination of the peripheral nervous system: required for differentiation of promyelinating Schwann cells and for normal myelination of axons. Also acts as a regulator of body length and bone mass. Acts as a regulator of blood-brain barrier formation in the central nervous system vie its association with LRP1 and ITGB1. This Homo sapiens (Human) protein is Adhesion G-protein coupled receptor G6.